A 212-amino-acid chain; its full sequence is Thymidylate kinase (212 aa).

An ATP-binding site is contributed by 7-14; that stretch reads GGEGCGKT.

Belongs to the thymidylate kinase family.

It carries out the reaction dTMP + ATP = dTDP + ADP. In terms of biological role, phosphorylation of dTMP to form dTDP in both de novo and salvage pathways of dTTP synthesis. This chain is Thymidylate kinase, found in Gloeobacter violaceus (strain ATCC 29082 / PCC 7421).